The sequence spans 471 residues: Cell division protein FtsP (471 aa).

Residues 1 to 27 (MSLSRRSFLQASGVALAAGALPLKAEA) constitute a signal peptide (tat-type signal). The 60-residue stretch at 229–288 (VRLRLLNASNARRYELSMTDNRAFHVVASDLGFLPAPMTVKRLSLGPGERREVLVDMSQG) folds into the Plastocyanin-like domain.

The protein belongs to the FtsP family. Predicted to be exported by the Tat system. The position of the signal peptide cleavage has not been experimentally proven.

The protein resides in the periplasm. Cell division protein that is required for growth during stress conditions. May be involved in protecting or stabilizing the divisomal assembly under conditions of stress. This Rahnella sp. (strain Y9602) protein is Cell division protein FtsP.